A 483-amino-acid chain; its full sequence is tRNA sulfurtransferase (483 aa).

Residues Pro62 to Arg166 form the THUMP domain. ATP is bound by residues Leu184–Ile185, Lys266, Gly288, and Gln297. A disulfide bridge links Cys345 with Cys457. Residues Leu405 to Pro483 enclose the Rhodanese domain. Cys457 serves as the catalytic Cysteine persulfide intermediate.

The protein belongs to the ThiI family.

It localises to the cytoplasm. It catalyses the reaction [ThiI sulfur-carrier protein]-S-sulfanyl-L-cysteine + a uridine in tRNA + 2 reduced [2Fe-2S]-[ferredoxin] + ATP + H(+) = [ThiI sulfur-carrier protein]-L-cysteine + a 4-thiouridine in tRNA + 2 oxidized [2Fe-2S]-[ferredoxin] + AMP + diphosphate. The catalysed reaction is [ThiS sulfur-carrier protein]-C-terminal Gly-Gly-AMP + S-sulfanyl-L-cysteinyl-[cysteine desulfurase] + AH2 = [ThiS sulfur-carrier protein]-C-terminal-Gly-aminoethanethioate + L-cysteinyl-[cysteine desulfurase] + A + AMP + 2 H(+). The protein operates within cofactor biosynthesis; thiamine diphosphate biosynthesis. Its function is as follows. Catalyzes the ATP-dependent transfer of a sulfur to tRNA to produce 4-thiouridine in position 8 of tRNAs, which functions as a near-UV photosensor. Also catalyzes the transfer of sulfur to the sulfur carrier protein ThiS, forming ThiS-thiocarboxylate. This is a step in the synthesis of thiazole, in the thiamine biosynthesis pathway. The sulfur is donated as persulfide by IscS. In Yersinia pseudotuberculosis serotype IB (strain PB1/+), this protein is tRNA sulfurtransferase.